The following is a 287-amino-acid chain: Cbb3-type cytochrome c oxidase subunit FixPc (287 aa).

Topologically, residues 1–36 are cytoplasmic; that stretch reads MSEKHIDEFSGVETTGHEWDGIRELNNPMPRWWVWT. The chain crosses the membrane as a helical span at residues 37-57; sequence FYATIVWALGYAIAYPAIPMI. The Periplasmic portion of the chain corresponds to 58 to 287; that stretch reads TDATKGMLGF…IFVHSLGGGT (230 aa). Cytochrome c domains are found at residues 108–196 and 203–284; these read FAIA…WGLT and GLAE…HSLG. Positions 121, 124, 125, 173, 216, 219, 220, and 261 each coordinate heme c.

Belongs to the CcoP / FixP family. Component of the cbb3-type cytochrome c oxidase at least composed of FixN, FixO, FixQ and FixP. The cofactor is heme c.

It localises to the cell inner membrane. Its pathway is energy metabolism; oxidative phosphorylation. In terms of biological role, C-type cytochrome. Part of the cbb3-type cytochrome c oxidase complex. FixP subunit is required for transferring electrons from donor cytochrome c via its heme groups to FixO subunit. From there, electrons are shuttled to the catalytic binuclear center of FixN subunit where oxygen reduction takes place. The complex also functions as a proton pump. This Rhizobium leguminosarum bv. viciae protein is Cbb3-type cytochrome c oxidase subunit FixPc.